We begin with the raw amino-acid sequence, 1044 residues long: Pre-mRNA-splicing factor ATP-dependent RNA helicase DHX16 (1044 aa).

Disordered stretches follow at residues 101 to 210 (EDSE…AYEE) and 374 to 394 (LQGN…QKES). 3 positions are modified to phosphoserine: serine 103, serine 106, and serine 107. Residues 119–130 (QKKRKKRKHLRK) show a composition bias toward basic residues. Positions 134 to 143 (EEEEEEEEEA) are enriched in acidic residues. The residue at position 163 (serine 163) is a Phosphoserine. The segment covering 169–210 (RTERERLQDLEERDAFAERVRQRDKDRTRNVLERSDKKAYEE) has biased composition (basic and acidic residues). Positions 412–576 (LAAIANHQVL…FDDAPVFRIP (165 aa)) constitute a Helicase ATP-binding domain. 425-432 (GETGSGKT) contributes to the ATP binding site. Residues 523 to 526 (DEAH) carry the DEAH box motif. One can recognise a Helicase C-terminal domain in the interval 601–774 (SVLQIHVTQP…NVVLLLKSLG (174 aa)). Position 715 is a phosphothreonine (threonine 715).

This sequence belongs to the DEAD box helicase family. DEAH subfamily. DDX16/PRP8 sub-subfamily. Component of pre-catalytic spliceosome complexes. Component of the minor spliceosome, which splices U12-type introns. Interacts with GPKOW. Interacts with TRIM6. Interacts with RIGI.

The protein resides in the nucleus. It is found in the nucleoplasm. Its subcellular location is the cytoplasm. The enzyme catalyses ATP + H2O = ADP + phosphate + H(+). Its function is as follows. Required for pre-mRNA splicing as a component of the spliceosome. Contributes to pre-mRNA splicing after spliceosome formation and prior to the first transesterification reaction. As a component of the minor spliceosome, involved in the splicing of U12-type introns in pre-mRNAs. Also plays a role in innate antiviral response by acting as a pattern recognition receptor sensing splicing signals in viral RNA. Mechanistically, TRIM6 promotes the interaction between unanchored 'Lys-48'-polyubiquitin chains and DHX16, leading to DHX16 interaction with RIGI and ssRNA to amplify RIGI-dependent innate antiviral immune responses. This is Pre-mRNA-splicing factor ATP-dependent RNA helicase DHX16 (DHX16) from Pan troglodytes (Chimpanzee).